A 52-amino-acid chain; its full sequence is MAGNRSIITLECKTCKERNYTTTKNKKKTQDKLALSKFCPRCRKHVDHKETK.

It belongs to the bacterial ribosomal protein bL33 family.

The polypeptide is Large ribosomal subunit protein bL33 (Anaeromyxobacter sp. (strain Fw109-5)).